We begin with the raw amino-acid sequence, 590 residues long: MTAEDSTTAMNSDPTVGSSTKVPEGVAGAPNEAALLALMERTGYNMVQENGQRKYGGPPPGWEGPHPQRGCEVFVGKIPRDVYEDELVPVFETVGRIYELRLMMDFDGKNRGYAFVMYCHKHEAKRAVRELNNYEIRPGRLLGVCCSVDNCRLFIGGIPKMKKRGEILEEIAKVTEGVLNVIVYASAADKMKNRGFAFVEYESHRAAAMARRKLMPGRIQLWGHQIAVDWAEPEIDVDEDVMQTVKILYVRNLMIETTEETIKRSFGQFNPGCVERVKKIRDYAFVHFTSREDAVHAMNNLNGTELEGSCLEVTLAKPVDKEQYSRYQKAAKGGGGSAEAVAQQPSYVYSCDPYTLAYYGYPYNALIGPNRDYFVKTGSIRGRGRGAAGNRTPGPRGSYLGGYSAGRGIYSRYHEGKGKQQEKGYELVPNLEISAVNPVAIKPGTVAIPAIGAQYSMFQAAPAPKIIEDGKIHTMEHMISPIAVQPDPATAAAAAAAAAAAAVIPAVSTPPPFQGRPITPVYTVAPNVPRIPTAGIYGASYVPFAAPATATIATLQKNAAAAVYGGYAGYIPQAFPAALQVPIHDVYQTY.

A compositionally biased stretch (polar residues) spans 1-21 (MTAEDSTTAMNSDPTVGSSTK). The segment at 1–26 (MTAEDSTTAMNSDPTVGSSTKVPEGV) is disordered. 3 consecutive RRM domains span residues 71-149 (CEVF…CSVD), 151-233 (CRLF…WAEP), and 246-318 (KILY…LAKP). R396 and R407 each carry asymmetric dimethylarginine; alternate. 2 positions are modified to omega-N-methylarginine; alternate: R396 and R407.

Belongs to the RRM RBM47 family. In terms of assembly, homodimer. Interacts with A1CF. Interacts with APOBEC1; form an mRNA editing complex. Interacts with RBPMS.

It localises to the nucleus. Its subcellular location is the cytoplasm. Its function is as follows. Single-stranded RNA-binding protein that functions in a variety of RNA processes, including alternative splicing, RNA stabilization, and RNA editing. Functions as an enzyme-substrate adapter for the cytidine deaminase APOBEC1. With APOBEC1 forms an mRNA editing complex involved into cytidine to uridine editing of a variety of mRNA molecules. Through the binding of their 3'UTR, also stabilizes a variety of mRNAs and regulates the expression of genes such as the interferon alpha/beta receptor and interleukin-10. Also involved in the alternative splicing of several genes including TJP1. Binds the pre-mRNA (U)GCAUG consensus sequences in downstream intronic regions of alternative exons regulating their exclusion and inclusion into mRNAs. Independently of its RNA-binding activity, could negatively regulate MAVS by promoting its lysosomal degradation. This chain is RNA-binding protein 47, found in Rattus norvegicus (Rat).